A 301-amino-acid chain; its full sequence is MSDAEEVVEEYEEEQEEEDWSEEEEDEQEEAVEEEEAGGAEPEPEGEAETEEANVEEVGPDEEAKDAEEGPVEDTKPKPSRLFMPNLVPPKIPDGERVDFDDIHRKRVEKDLNELQTLIEAHFENRKKEEEELISLKDRIEKRRAERAEQQRIRNEREKERQNRLAEERARREEEENRRKAEDEARKKKALSNMMHFGGYIQKQAQTERKSGKRQTEREKKKKILAERRKALAIDHLNEDQLREKAKELWQSIHNLEAEKFDLQEKFKQQKYEINVLRNRINDNQKVSKTRGKAKVTGRWK.

Residues 1-72 (MSDAEEVVEE…EAKDAEEGPV (72 aa)) are compositionally biased toward acidic residues. 2 disordered regions span residues 1-97 (MSDA…DGER) and 125-224 (NRKK…KKKI). The residue at position 2 (S2) is an N-acetylserine. S2 bears the Phosphoserine; by CK2 mark. Basic and acidic residues-rich tracts occupy residues 125–186 (NRKK…DEAR) and 206–224 (QTER…KKKI). Residue T207 is modified to Phosphothreonine; by PKC/PRKCA. The residue at position 211 (S211) is a Phosphoserine; by PKC/PRKCA. A Phosphothreonine; by PKC/PRKCA and RAF1 modification is found at T216. T297 carries the post-translational modification Phosphothreonine; by PKC/PRKCA.

Belongs to the troponin T family. Post-translationally, phosphorylation at Thr-216 by PRKCA induces significant reduction in myofilament calcium sensitivity and actomyosin ATPase activity.

In terms of biological role, troponin T is the tropomyosin-binding subunit of troponin, the thin filament regulatory complex which confers calcium-sensitivity to striated muscle actomyosin ATPase activity. This chain is Troponin T, cardiac muscle (Tnnt2), found in Mus musculus (Mouse).